Consider the following 165-residue polypeptide: UPF0178 protein Bphyt_5655 (165 aa).

2 disordered regions span residues 115-134 (LRGS…RDSK) and 139-165 (ELDR…PPTE).

The protein belongs to the UPF0178 family.

In Paraburkholderia phytofirmans (strain DSM 17436 / LMG 22146 / PsJN) (Burkholderia phytofirmans), this protein is UPF0178 protein Bphyt_5655.